The following is a 118-amino-acid chain: cAMP-responsive element-binding protein-like 2 (118 aa).

The segment at 1–25 (MDDSKVSGGKVKKPGKRGRKPAKID) is disordered. A compositionally biased stretch (basic residues) spans 10–21 (KVKKPGKRGRKP). The bZIP domain maps to 23 to 86 (KIDLKAKLER…AAMDQGKIPS (64 aa)). Positions 29 to 60 (KLERSRQSARECRARKKLRYQYLEELVSSRER) are basic motif. The interval 62 to 69 (ICALREEL) is leucine-zipper.

This sequence belongs to the bZIP family. ATF subfamily.

The protein resides in the nucleus. Functionally, probable regulator of creb1 transcriptional activity which is involved in adipose cells differentiation. May also play a regulatory role in the cell cycle. This Xenopus tropicalis (Western clawed frog) protein is cAMP-responsive element-binding protein-like 2 (crebl2).